Here is a 159-residue protein sequence, read N- to C-terminus: MADS-box transcription factor 23 (159 aa).

The MADS-box domain maps to 1–61 (MGRGKIEIKR…SRLYDFASSS (61 aa)). Residues 86–159 (AKLWQQEAAS…QELSRKVVTT (74 aa)) enclose the K-box domain.

In terms of tissue distribution, expressed in seedling roots and developing seeds.

It is found in the nucleus. Probable transcription factor. In Oryza sativa subsp. japonica (Rice), this protein is MADS-box transcription factor 23 (MADS23).